Here is a 364-residue protein sequence, read N- to C-terminus: Molybdenum import ATP-binding protein ModC (364 aa).

The 229-residue stretch at 1–229 (MLLIDIKKQL…PLMRPWLNAS (229 aa)) folds into the ABC transporter domain. 31 to 38 (GRSGAGKS) is an ATP binding site. The Mop domain occupies 293-360 (HSSIRNILPV…IKGVSVTQSD (68 aa)).

This sequence belongs to the ABC transporter superfamily. Molybdate importer (TC 3.A.1.8) family. In terms of assembly, the complex is composed of two ATP-binding proteins (ModC), two transmembrane proteins (ModB) and a solute-binding protein (ModA).

It is found in the cell inner membrane. It catalyses the reaction molybdate(out) + ATP + H2O = molybdate(in) + ADP + phosphate + H(+). Functionally, part of the ABC transporter complex ModABC involved in molybdenum import. Responsible for energy coupling to the transport system. The protein is Molybdenum import ATP-binding protein ModC of Aliivibrio fischeri (strain ATCC 700601 / ES114) (Vibrio fischeri).